A 450-amino-acid polypeptide reads, in one-letter code: UDP-N-acetylmuramoylalanine--D-glutamate ligase (450 aa).

115 to 121 (GTNGKST) provides a ligand contact to ATP.

This sequence belongs to the MurCDEF family.

The protein localises to the cytoplasm. The enzyme catalyses UDP-N-acetyl-alpha-D-muramoyl-L-alanine + D-glutamate + ATP = UDP-N-acetyl-alpha-D-muramoyl-L-alanyl-D-glutamate + ADP + phosphate + H(+). It functions in the pathway cell wall biogenesis; peptidoglycan biosynthesis. Its function is as follows. Cell wall formation. Catalyzes the addition of glutamate to the nucleotide precursor UDP-N-acetylmuramoyl-L-alanine (UMA). This is UDP-N-acetylmuramoylalanine--D-glutamate ligase from Syntrophotalea carbinolica (strain DSM 2380 / NBRC 103641 / GraBd1) (Pelobacter carbinolicus).